The chain runs to 159 residues: MIKEWATVVSWQNGQALVSCDVKASCSSCASRAGCGSRVLNKLGPQTTHTIVVPCDEPLVPGQKVELGIAEGSLLSSALLVYMSPLVGLFLIASLFQLLFASDVAALCGAILGGIGGFLIARGYSRKFAARAEWQPIILSVALPPGLVRFETSSEDASQ.

Topologically, residues 1–72 (MIKEWATVVS…QKVELGIAEG (72 aa)) are cytoplasmic. Residues 73-95 (SLLSSALLVYMSPLVGLFLIASL) traverse the membrane as a helical segment. Residues 96–98 (FQL) are Periplasmic-facing. A helical transmembrane segment spans residues 99–121 (LFASDVAALCGAILGGIGGFLIA). The Cytoplasmic segment spans residues 122-159 (RGYSRKFAARAEWQPIILSVALPPGLVRFETSSEDASQ).

Belongs to the RseC family.

It localises to the cell inner membrane. Its function is as follows. May play a role in reduction of the SoxR iron-sulfur cluster. May work together with the RsxABCDGE complex. In Escherichia coli (strain K12), this protein is Protein RseC.